The primary structure comprises 148 residues: 3-hydroxyacyl-[acyl-carrier-protein] dehydratase FabZ (148 aa).

His-55 is a catalytic residue.

The protein belongs to the thioester dehydratase family. FabZ subfamily.

The protein resides in the cytoplasm. The enzyme catalyses a (3R)-hydroxyacyl-[ACP] = a (2E)-enoyl-[ACP] + H2O. Functionally, involved in unsaturated fatty acids biosynthesis. Catalyzes the dehydration of short chain beta-hydroxyacyl-ACPs and long chain saturated and unsaturated beta-hydroxyacyl-ACPs. The sequence is that of 3-hydroxyacyl-[acyl-carrier-protein] dehydratase FabZ from Haemophilus influenzae (strain PittEE).